A 569-amino-acid chain; its full sequence is Urease subunit alpha (569 aa).

A Urease domain is found at 131-569; it reads GAIDSHIHFI…LPLAQRYLLL (439 aa). Ni(2+) contacts are provided by histidine 136, histidine 138, and lysine 219. Residue lysine 219 is modified to N6-carboxylysine. A substrate-binding site is contributed by histidine 221. Ni(2+)-binding residues include histidine 248 and histidine 274. The Proton donor role is filled by histidine 322. Position 362 (aspartate 362) interacts with Ni(2+).

The protein belongs to the metallo-dependent hydrolases superfamily. Urease alpha subunit family. In terms of assembly, heterotrimer of UreA (gamma), UreB (beta) and UreC (alpha) subunits. Three heterotrimers associate to form the active enzyme. Ni cation is required as a cofactor. In terms of processing, carboxylation allows a single lysine to coordinate two nickel ions.

It is found in the cytoplasm. It carries out the reaction urea + 2 H2O + H(+) = hydrogencarbonate + 2 NH4(+). Its pathway is nitrogen metabolism; urea degradation; CO(2) and NH(3) from urea (urease route): step 1/1. This chain is Urease subunit alpha, found in Prochlorococcus marinus (strain NATL2A).